Reading from the N-terminus, the 244-residue chain is Inner kinetochore subunit fta7 (244 aa).

The protein belongs to the CENP-Q/OKP1 family. As to quaternary structure, component of the heterotetrameric kinetochore subcomplex COMA, which consists of fta2, fta7, mal2 and mis17. The COMA subcomplex is part of a larger constitutive centromere-associated network (CCAN) (also known as central kinetochore Sim4 complex in fission yeast), which is composed of at least cnl2, cnp3, cnp20, fta1, fta2, fta3, fta4, fta6, fta7, mal2, mhf1, mhf2, mis6, mis15, mis17, sim4 and wip1.

It is found in the nucleus. The protein resides in the chromosome. Its subcellular location is the centromere. It localises to the kinetochore. The protein localises to the cytoplasm. It is found in the cytoskeleton. The protein resides in the microtubule organizing center. Its subcellular location is the spindle pole body. Its function is as follows. Component of the kinetochore, a multiprotein complex that assembles on centromeric DNA and attaches chromosomes to spindle microtubules, mediating chromosome segregation and sister chromatid segregation during meiosis and mitosis. Component of the inner kinetochore COMA complex, which connects centromere-associated proteins and the outer kinetochore. COMA interacts with other inner kinetochore proteins to form the inner kinetochore constitutive centromere-associated network (CCAN), which serves as a structural platform for outer kinetochore assembly. This is Inner kinetochore subunit fta7 (fta7) from Schizosaccharomyces pombe (strain 972 / ATCC 24843) (Fission yeast).